Consider the following 465-residue polypeptide: Probable protein phosphatase 2C 71 (465 aa).

3 disordered regions span residues 14 to 47 (RPCK…ACRA), 68 to 119 (RPRD…GEVT), and 133 to 191 (SGGA…PAEE). Residues 18–30 (LAPPPPPPLPVSP) are compositionally biased toward pro residues. Low complexity-rich tracts occupy residues 84 to 106 (AVAP…AAAE) and 133 to 143 (SGGAEATATSG). Positions 222–460 (ASGAAILPHP…DDIAVVVSIV (239 aa)) constitute a PPM-type phosphatase domain. Mn(2+) contacts are provided by D254, G255, D384, and D451.

This sequence belongs to the PP2C family. It depends on Mg(2+) as a cofactor. Mn(2+) serves as cofactor.

The enzyme catalyses O-phospho-L-seryl-[protein] + H2O = L-seryl-[protein] + phosphate. It carries out the reaction O-phospho-L-threonyl-[protein] + H2O = L-threonyl-[protein] + phosphate. This Oryza sativa subsp. japonica (Rice) protein is Probable protein phosphatase 2C 71.